A 2261-amino-acid chain; its full sequence is Phospholipid-transporting ATPase ABCA1 (2261 aa).

A lipid anchor (S-palmitoyl cysteine) is attached at C3. N-linked (GlcNAc...) asparagine glycosylation is present at N14. Residues T22–V42 form a helical membrane-spanning segment. The S-palmitoyl cysteine moiety is linked to residue C23. Residues R43–S639 are Extracellular-facing. An annulus domain 1 region spans residues W69–P80. C75 and C309 are disulfide-bonded. N-linked (GlcNAc...) asparagine glycans are attached at residues N98, N151, N161, N196, N244, N292, N337, and N349. An annulus domain 2 region spans residues S368–L379. N-linked (GlcNAc...) asparagine glycosylation is found at N400, N478, N489, and N521. The tract at residues E564 to A594 is gateway domain. 5 helical membrane passes run M640 to V660, F683 to I703, S716 to I736, L745 to V765, and I777 to F797. The N-linked (GlcNAc...) asparagine glycan is linked to N820. A helical membrane pass occupies residues M827 to P847. Residues V899–V1131 form the ABC transporter 1 domain. G933–T940 is an ATP binding site. A helical transmembrane segment spans residues L1041–D1057. Position 1042 is a phosphoserine; by PKA (S1042). 2 S-palmitoyl cysteine lipidation sites follow: C1110 and C1111. Residues N1144 and N1294 are each glycosylated (N-linked (GlcNAc...) asparagine). Positions R1283 to D1312 are disordered. The span at E1287–D1299 shows a compositional bias: acidic residues. A Phosphoserine modification is found at S1296. The chain crosses the membrane as a helical span at residues I1351 to F1371. Over G1372–L1656 the chain is Extracellular. Residue N1453 is glycosylated (N-linked (GlcNAc...) asparagine). The cysteines at positions 1463 and 1477 are disulfide-linked. N1504 and N1637 each carry an N-linked (GlcNAc...) asparagine glycan. 6 helical membrane passes run V1657–I1677, F1703–C1723, L1735–P1755, V1768–L1788, I1802–M1822, and N1852–Y1872. An ABC transporter 2 domain is found at L1912 to R2144. G1946–S1953 serves as a coordination point for ATP. Residue N2044 is glycosylated (N-linked (GlcNAc...) asparagine). The residue at position 2054 (S2054) is a Phosphoserine; by PKA. N-linked (GlcNAc...) asparagine glycosylation is present at N2238.

It belongs to the ABC transporter superfamily. ABCA family. In terms of assembly, interacts with MEGF10. May interact with APOE1; functionally associated with APOE1 in the biogenesis of HDLs. Interacts with ABCA8; this interaction potentiates cholesterol efflux. Interacts with ABCA12 and NR1H2; this interaction is required for ABCA1 localization to the cell surface and is necessary for its normal activity and stability. Phosphorylation on Ser-2054 regulates phospholipid efflux. In terms of processing, palmitoylated by ZDHHC8. Palmitoylation is essential for localization to the plasma membrane. Widely expressed, but most abundant in macrophages.

It is found in the cell membrane. The protein resides in the endosome. The catalysed reaction is ATP + H2O + phospholipidSide 1 = ADP + phosphate + phospholipidSide 2.. It catalyses the reaction a 1,2-diacyl-sn-glycero-3-phosphocholine(out) + ATP + H2O = a 1,2-diacyl-sn-glycero-3-phosphocholine(in) + ADP + phosphate + H(+). The enzyme catalyses a 1,2-diacyl-sn-glycero-3-phospho-L-serine(out) + ATP + H2O = a 1,2-diacyl-sn-glycero-3-phospho-L-serine(in) + ADP + phosphate + H(+). It carries out the reaction a sphingomyelin(in) + ATP + H2O = a sphingomyelin(out) + ADP + phosphate + H(+). The catalysed reaction is cholesterol(in) + ATP + H2O = cholesterol(out) + ADP + phosphate + H(+). Its activity is regulated as follows. ATPase activity is decreased by cholesterol and ceramide. ATPase activity is stimulated by phosphatidylcholine and to a lesser degree by phosphatidylserine and sphingomyelin. Phospholipid translocase activity is highly reduced by berylium fluoride and aluminum flouride and reduced by N-ethylmaleimide. In terms of biological role, catalyzes the translocation of specific phospholipids from the cytoplasmic to the extracellular/lumenal leaflet of membrane coupled to the hydrolysis of ATP. Thereby, participates in phospholipid transfer to apolipoproteins to form nascent high density lipoproteins/HDLs. Transports preferentially phosphatidylcholine over phosphatidylserine. May play a similar role in the efflux of intracellular cholesterol to apolipoproteins and the formation of nascent high density lipoproteins/HDLs. Translocates phospholipids from the outer face of the plasma membrane and forces it through its gateway and annulus into an elongated hydrophobic tunnel in its extracellular domain. The protein is Phospholipid-transporting ATPase ABCA1 of Homo sapiens (Human).